Consider the following 399-residue polypeptide: MKPPRRWMYGRGGGKGKPAGLLLLGVFLCLSVVLLLLLHGSSPSLEGEGRKPEAVEAAGGGGEEEEVAVARAEVEEAPLPPGNARLAFLFIARNRLPLDLVWDAFFRGDKEGRFSIFVHSRPGFVLTRATTRSGFFYNRQVNNSVQVDWGEASMIEAERVLLAHALKDPLNERFVFVSDSCVPLYNFNYTYDYIMSSSTSFVDSFADTKAGRYNPRMDPIIPVENWRKGSQWAVLTRKHAEVVVEDEEVLPEFQKHCRRRPLPEFWRDWDRPIPAEAWKAHNCIPDEHYVQTLLAQHGLEEELTRRSVTHSAWDLSSSKDRERRGWHPVTYKISDATPALVKSIKDIDNIYYETENRKEWCTSNGKPAPCFLFARKFTRAAGLKLLDLSLIAANGASTM.

The Cytoplasmic portion of the chain corresponds to Met-1–Lys-17. A helical; Signal-anchor for type II membrane protein transmembrane segment spans residues Pro-18–Leu-38. Residues His-39–Met-399 lie on the Lumenal side of the membrane. Residues Asn-142 and Asn-188 are each glycosylated (N-linked (GlcNAc...) asparagine).

It belongs to the glycosyltransferase 14 family. As to expression, expressed in roots, culms, leaves and panicles. Expressed in vascular bundles of leaf sheaths and stems where sclerenchyma cells are developing. Expressed in mechanical tissues of young organs, such as young leaf sheaths, stems and tiller buds.

The protein localises to the membrane. Functionally, glycosyltransferase required for the regulation of cellulose biosynthesis in the cell wall. Required for the biosynthesis of hexoses (glucose, mannose and galactose) in both cellulosic and non-cellulosic (pectins and hemicelluloses) components of cell walls. Required for the formation of arabinogalactan proteins which contribute to the strengthening of cell walls. Possesses low glycosyltransferase activity. The chain is Glycosyltransferase BC10 from Oryza sativa subsp. japonica (Rice).